Reading from the N-terminus, the 129-residue chain is NADH-quinone oxidoreductase subunit K 2 (129 aa).

3 helical membrane passes run 3 to 23 (LAYPAVLSALLFSTGLYGVLA), 28 to 48 (ILVLMSVELMLNAVNLNLVAF), and 68 to 88 (LFTIAIAAAEIGIGLAIVLAV). The interval 98–129 (DKLRDTAEGPEPDGPGTDGSAPTAAEKAEATA) is disordered. The segment covering 111–122 (GPGTDGSAPTAA) has biased composition (low complexity).

Belongs to the complex I subunit 4L family. In terms of assembly, NDH-1 is composed of 14 different subunits. Subunits NuoA, H, J, K, L, M, N constitute the membrane sector of the complex.

Its subcellular location is the cell membrane. It carries out the reaction a quinone + NADH + 5 H(+)(in) = a quinol + NAD(+) + 4 H(+)(out). Its function is as follows. NDH-1 shuttles electrons from NADH, via FMN and iron-sulfur (Fe-S) centers, to quinones in the respiratory chain. The immediate electron acceptor for the enzyme in this species is believed to be a menaquinone. Couples the redox reaction to proton translocation (for every two electrons transferred, four hydrogen ions are translocated across the cytoplasmic membrane), and thus conserves the redox energy in a proton gradient. This Streptomyces avermitilis (strain ATCC 31267 / DSM 46492 / JCM 5070 / NBRC 14893 / NCIMB 12804 / NRRL 8165 / MA-4680) protein is NADH-quinone oxidoreductase subunit K 2.